A 208-amino-acid polypeptide reads, in one-letter code: Small ribosomal subunit protein eS8 (208 aa).

Positions Met-1 to Ala-34 are disordered. The span at His-7–Lys-26 shows a compositional bias: basic residues.

This sequence belongs to the eukaryotic ribosomal protein eS8 family. In terms of assembly, component of the small ribosomal subunit. Identified in a IGF2BP1-dependent mRNP granule complex containing untranslated mRNAs. Part of the small subunit (SSU) processome, composed of more than 70 proteins and the RNA chaperone small nucleolar RNA (snoRNA) U3.

Its subcellular location is the cytoplasm. It localises to the membrane. It is found in the nucleus. The protein localises to the nucleolus. Its function is as follows. Component of the small ribosomal subunit. The ribosome is a large ribonucleoprotein complex responsible for the synthesis of proteins in the cell. Part of the small subunit (SSU) processome, first precursor of the small eukaryotic ribosomal subunit. During the assembly of the SSU processome in the nucleolus, many ribosome biogenesis factors, an RNA chaperone and ribosomal proteins associate with the nascent pre-rRNA and work in concert to generate RNA folding, modifications, rearrangements and cleavage as well as targeted degradation of pre-ribosomal RNA by the RNA exosome. The chain is Small ribosomal subunit protein eS8 (RpS8) from Spodoptera frugiperda (Fall armyworm).